A 185-amino-acid chain; its full sequence is Bcl-2-modifying factor (185 aa).

The tract at residues 1-28 (MEPPQCVEELEDDVFQSEDGEPGTQPGG) is disordered. Residues 8–21 (EELEDDVFQSEDGE) show a composition bias toward acidic residues. The interval 67-75 (DKATQTLSP) is interaction with DLC2. The BH3 motif lies at 134–148 (IARKLQCIADQFHRL).

It belongs to the Bcl-2 family. As to quaternary structure, interacts with MCL1, BCL2, BCL2L1/BCL-Xl, BCL2A1 and BCL2L2/BCL-w. Interacts with the myosin V actin motor complex through its binding to DLC2. As to expression, widely expressed with an abundant expression in pancreas, liver kidney and hematopoietic tissues.

Its function is as follows. May play a role in apoptosis. The polypeptide is Bcl-2-modifying factor (Bmf) (Mus musculus (Mouse)).